The primary structure comprises 1004 residues: MEEYEEFCEKALGRAQEASLSTGSFLPAQAESVSLIRFHGVAVLSPLLTIEKRKKIQEEKQKALDVQSRKQANRKKALLTRVQEILENVQVRKAPNASDFDQWATETIYSNPEVTDLNVPVRVPNSLPSPTEHCTSVKLEKITGLLPVNNEDQQTPKRVGLPGDSEVSGSLRQCESPESRQAEDGAALRLSSASPQETIISDVLGKEEQDPSCLAEVTPDPYIMSLQNLMKRSKEYVERELSSRSLRNSLKRSVNETHSDRENDAAKASDCVKEKAPPMPIGRHCGSAIPDKPSLNKSNVLLQGASQASSMGTAGLASFSKIDLPAGAAPPAAPDAGSDFTVIPTFVTENKVKSLKGPYAKLPSPEPSMSPTMHRRHSRSASACQILINNPVNACELSPKGKEEAVDRTAPAAAETTNESETVPKSPTDLTGVCSSNVSATKITSESTREMVVGKPSQRQQALGAHLGNNVTVERSAMEGPFIADDRGAQKVDGTCMAVPKLHELQPSSQCVSSQTLEDVCELKSASLLAKNSCNLQMELNKSYDVKHPSPLLTQTQTSRQQMDTPPVFRGNEQFVDNSFEKVKRRLDLDVDSLQKENCPYIITAGVAEQERDRLLERRYPKGFVHINKNKMLETSPKEGQELLKSKMLAFEEMRKRLEEQHAQQLSLLIAEQEREQEQLQKEIEEQEKMLKEKAVTTDVSDLNSALEWRQRTDSALLETMLSQVDSLQTSNNSGFITSALQYSFGSAGEAPFYLWGSLTSGVTRVSGTRPCGRAQAKWSQVFNPEIHAKFNKITAVAKGFLTRKLMQTDKLKQLRQTVKDTMEFIRSFQSEAPLKRGVVSAQDASLQERVLAQLRAALYGIHDIFFVMDAAERMSILHHDREARKEKLLRQMDKMKSPRVALSVATQKSLDRKKFMKVAEMGMPNKKFLLKQNPSETRVLQPNQGQNAPVHRLLSRQGTPKTSVKGVVQNRQKPSQSRVPNRAPVSGAYAGKTQRKRPNVATI.

The interval 1-221 (MEEYEEFCEK…SCLAEVTPDP (221 aa)) is CEP97 binding. The stretch at 51–90 (EKRKKIQEEKQKALDVQSRKQANRKKALLTRVQEILENVQ) forms a coiled coil. The calmodulin-binding stretch occupies residues 64–82 (LDVQSRKQANRKKALLTRV). Residues 67–82 (QSRKQANRKKALLTRV) are required for interaction with CEP290. 2 disordered regions span residues 147-194 (PVNN…SSAS) and 239-279 (RELS…APPM). Ser-170 is subject to Phosphoserine. Positions 243 to 252 (SRSLRNSLKR) are enriched in low complexity. Positions 253–276 (SVNETHSDRENDAAKASDCVKEKA) are enriched in basic and acidic residues. The interval 349 to 564 (ENKVKSLKGP…QTQTSRQQMD (216 aa)) is interaction with CEP76. Phosphoserine is present on residues Ser-364, Ser-370, and Ser-398. A disordered region spans residues 401–433 (GKEEAVDRTAPAAAETTNESETVPKSPTDLTGV). The span at 415 to 433 (ETTNESETVPKSPTDLTGV) shows a compositional bias: polar residues. A Phosphoserine modification is found at Ser-550. A coiled-coil region spans residues 641–699 (QELLKSKMLAFEEMRKRLEEQHAQQLSLLIAEQEREQEQLQKEIEEQEKMLKEKAVTTD). Calmodulin-binding stretches follow at residues 773-813 (GRAQ…DKLK) and 901-916 (VALS…RKKF). Positions 955–1004 (LSRQGTPKTSVKGVVQNRQKPSQSRVPNRAPVSGAYAGKTQRKRPNVATI) are disordered. Positions 970–980 (QNRQKPSQSRV) are enriched in polar residues. Over residues 994-1004 (TQRKRPNVATI) the composition is skewed to basic residues.

As to quaternary structure, interacts with CALM1, CETN2, CEP76, CEP104, CEP290 and TALPID3. Interacts with CEP97. Seems to associate with discrete CETN2, CEP97 and CEP290-containing complexes. Interacts with NEURL4 and CCNF; these interactions are not mutually exclusive and both lead to CCP110 ubiquitination and proteasome-dependent degradation. Via its interaction with NEURL4, may indirectly interact with HERC2. Interacts with KIF24, leading to its recruitment to centrioles. Interacts with USP20 and USP33. Interacts with MPHOSPH9. Interacts (via N-terminal region) with ENKD1 (via central region); ENKD1 competes with CEP97 for binding to CCP110, destabilizing the interaction between CP110 and CEP97 which promotes the removal of CCP110 and CEP97 from the mother centriole and allows the initiation of ciliogenesis. Post-translationally, phosphorylated by CDKs. Ubiquitinated by the SCF(CCNF) during G2 phase, leading to its degradation by the proteasome and preventing centrosome reduplication. Deubiquitinated by USP33 in S and G2/M phase, leading to stabilize CCP110 during the period which centrioles duplicate and elongate. Ubiquitinated by the EDVP complex, leading to its degradation.

The protein resides in the cytoplasm. Its subcellular location is the cytoskeleton. It is found in the microtubule organizing center. It localises to the centrosome. The protein localises to the centriole. The protein resides in the cilium basal body. Necessary for centrosome duplication at different stages of procentriole formation. Acts as a key negative regulator of ciliogenesis in collaboration with CEP97 by capping the mother centriole thereby preventing cilia formation. Also involved in promoting ciliogenesis. May play a role in the assembly of the mother centriole subdistal appendages (SDA) thereby effecting the fusion of recycling endosomes to basal bodies during cilia formation. Required for correct spindle formation and has a role in regulating cytokinesis and genome stability via cooperation with CALM1 and CETN2. This Mus musculus (Mouse) protein is Centriolar coiled-coil protein of 110 kDa (Ccp110).